The sequence spans 950 residues: Protocadherin alpha-9 (950 aa).

Positions 1–29 (MLYSSRGDPEGQPLLLSLLILAMWVVGSG) are cleaved as a signal peptide. Cadherin domains follow at residues 30–133 (QLHY…PPVF), 134–242 (PATQ…APVF), 243–350 (DRTL…APQL), 351–455 (TIKT…APAF), 456–565 (AQPE…APAL), and 588–678 (GVVV…APKS). The Extracellular portion of the chain corresponds to 30 to 697 (QLHYSVPEEA…GPEVTLVDVN (668 aa)). Asn-254 and Asn-265 each carry an N-linked (GlcNAc...) asparagine glycan. Asn-548 is a glycosylation site (N-linked (GlcNAc...) asparagine). The helical transmembrane segment at 698 to 718 (VYLIIAICAVSSLLVLTLLLY) threads the bilayer. Residues 719-950 (TVLRCSAMPT…GNSTTDNSDQ (232 aa)) lie on the Cytoplasmic side of the membrane. A PXXP 1 repeat occupies 734 to 737 (PGKP). The segment at 734-894 (PGKPTLVCSS…PDKFIIPGSP (161 aa)) is 5 X 4 AA repeats of P-X-X-P. Disordered stretches follow at residues 759–808 (CSGE…DWRY) and 827–950 (ILRA…NSDQ). The span at 789 to 798 (PSASSDSSGK) shows a compositional bias: polar residues. 4 PXXP repeats span residues 799-802 (PRQP), 832-835 (PGGP), 873-876 (PGNP), and 891-894 (PGSP). Basic and acidic residues predominate over residues 909 to 923 (DKSDFITFGKKEETK).

It is found in the cell membrane. Functionally, potential calcium-dependent cell-adhesion protein. May be involved in the establishment and maintenance of specific neuronal connections in the brain. The protein is Protocadherin alpha-9 (PCDHA9) of Pan troglodytes (Chimpanzee).